The primary structure comprises 474 residues: SPQXETKASVGFKAGVKDYKLTYYTPDYKTKDTDILAAFRVTPQPGVPPEEAGAAVAAESSTGTWTTVWTDGLTSLDRYKGRCYHIEPVAGEENHFIAYVAYPLDLFEEGSVTNMFTSIVGNVFGFKALRALRLEDLRIPPAYSKTFQGPPHGIQVERDKLNKYGRPLLGCTIKPKLGLSAKNYGRAVYECLRGGLDFTKDDENVNSQPFMRWRDRFVFCAEAIYKAQAETGEIKGHYLNATAGTCEEMIKRAVFARELGVPIIMHDYLTGGFTANTSLAHYCRDNGLLLHIHRAMHAVIDRQKNHGIHFRVLAKALRMSGGDHIHSGTVVGKLEGERDITLGFVDLLRDDFIAKDRSRGIYFTQDWVSLPGVLPVASGGIHVWHMPALTEIFGDDSVLQFGGGTLGHPWGNAPGAVANRVALEACVQARNEGRDLAREGNEIIREASKWSPELAAACEVWKEIKFEFQAVDTL.

Position 13 is an N6,N6,N6-trimethyllysine (Lys13). Residues Asn122 and Thr172 each coordinate substrate. Lys174 serves as the catalytic Proton acceptor. Residue Lys176 coordinates substrate. Mg(2+)-binding residues include Lys200, Asp202, and Glu203. Lys200 carries the post-translational modification N6-carboxylysine. Residue His293 is the Proton acceptor of the active site. The substrate site is built by Arg294, His326, and Ser378.

The protein belongs to the RuBisCO large chain family. Type I subfamily. Heterohexadecamer of 8 large chains and 8 small chains; disulfide-linked. The disulfide link is formed within the large subunit homodimers. Mg(2+) is required as a cofactor. Post-translationally, the disulfide bond which can form in the large chain dimeric partners within the hexadecamer appears to be associated with oxidative stress and protein turnover.

It localises to the plastid. Its subcellular location is the chloroplast. It carries out the reaction 2 (2R)-3-phosphoglycerate + 2 H(+) = D-ribulose 1,5-bisphosphate + CO2 + H2O. It catalyses the reaction D-ribulose 1,5-bisphosphate + O2 = 2-phosphoglycolate + (2R)-3-phosphoglycerate + 2 H(+). RuBisCO catalyzes two reactions: the carboxylation of D-ribulose 1,5-bisphosphate, the primary event in carbon dioxide fixation, as well as the oxidative fragmentation of the pentose substrate in the photorespiration process. Both reactions occur simultaneously and in competition at the same active site. The chain is Ribulose bisphosphate carboxylase large chain from Dendrophthora clavata (Columbian mistletoe).